The following is a 503-amino-acid chain: Maturase K (503 aa).

The protein belongs to the intron maturase 2 family. MatK subfamily.

It is found in the plastid. The protein resides in the chloroplast. Functionally, usually encoded in the trnK tRNA gene intron. Probably assists in splicing its own and other chloroplast group II introns. The sequence is that of Maturase K from Syzygium anisatum (Aniseed myrtle).